The following is a 76-amino-acid chain: Vasotab-TY1 (76 aa).

An N-terminal signal peptide occupies residues 1–21 (MKFTLFSVLVVLLIATFVAAD). The region spanning 22-76 (DCPRICTADFRPVCGTPSGGRRSANRTFGNQCSLDSHNCLNKGDTYDKLHDGECK) is the Kazal-like domain. Cystine bridges form between Cys-23-Cys-60, Cys-27-Cys-53, and Cys-35-Cys-75.

Expressed by the salivary gland.

It localises to the secreted. Vasodilator protein that inhibits vasoconstriction of isolated rat femoral artery induced by phenylephrine. Since platelet aggregation and vasoconstriction are key hemostatic responses, particularly in small wounds, this protein likely participates in the antihemostatic responses during blood feeding. Blocks L-type calcium channels (Cav1/CACNA1) in left ventricular myocytes isolated from rat hearts. This chain is Vasotab-TY1, found in Tabanus yao (Horsefly).